The primary structure comprises 359 residues: UPF0496 protein At3g57100 (359 aa).

The stretch at 179-208 forms a coiled coil; it reads HEELAKMVVKLEKTMKDIDKKLRRVRGRRA. Residues 214–234 traverse the membrane as a helical segment; that stretch reads LLAPVIAVIFLSKLVAGLVPI.

It belongs to the UPF0496 family.

Its subcellular location is the membrane. The chain is UPF0496 protein At3g57100 from Arabidopsis thaliana (Mouse-ear cress).